Here is a 447-residue protein sequence, read N- to C-terminus: Elongation factor 1-alpha (447 aa).

The tr-type G domain occupies 5–230 (KVHINIVVIG…DNINEPKRPS (226 aa)). Positions 14–21 (GHVDSGKS) are G1. 14–21 (GHVDSGKS) is a binding site for GTP. K55 bears the N6,N6-dimethyllysine mark. Residues 70-74 (GITID) are G2. K79 is subject to N6,N6,N6-trimethyllysine. The interval 91–94 (DAPG) is G3. GTP contacts are provided by residues 91–95 (DAPGH) and 153–156 (NKMD). The segment at 153–156 (NKMD) is G4. The residue at position 187 (K187) is an N6,N6,N6-trimethyllysine. A G5 region spans residues 194-196 (SGF). K261 is subject to N6-methyllysine. Residue E289 is modified to 5-glutamyl glycerylphosphorylethanolamine. An N6,N6,N6-trimethyllysine modification is found at K306. E362 bears the 5-glutamyl glycerylphosphorylethanolamine mark. K396 carries the post-translational modification N6,N6,N6-trimethyllysine.

The protein belongs to the TRAFAC class translation factor GTPase superfamily. Classic translation factor GTPase family. EF-Tu/EF-1A subfamily.

The protein resides in the cytoplasm. In terms of biological role, this protein promotes the GTP-dependent binding of aminoacyl-tRNA to the A-site of ribosomes during protein biosynthesis. This chain is Elongation factor 1-alpha, found in Vicia faba (Broad bean).